Reading from the N-terminus, the 471-residue chain is Glutamate--tRNA ligase (471 aa).

Positions 9-19 (PSPTGYLHVGG) match the 'HIGH' region motif. The 'KMSKS' region motif lies at 237-241 (KLSKR). An ATP-binding site is contributed by K240.

The protein belongs to the class-I aminoacyl-tRNA synthetase family. Glutamate--tRNA ligase type 1 subfamily. Monomer.

It localises to the cytoplasm. The catalysed reaction is tRNA(Glu) + L-glutamate + ATP = L-glutamyl-tRNA(Glu) + AMP + diphosphate. In terms of biological role, catalyzes the attachment of glutamate to tRNA(Glu) in a two-step reaction: glutamate is first activated by ATP to form Glu-AMP and then transferred to the acceptor end of tRNA(Glu). This is Glutamate--tRNA ligase from Pectobacterium atrosepticum (strain SCRI 1043 / ATCC BAA-672) (Erwinia carotovora subsp. atroseptica).